The chain runs to 654 residues: Threonine--tRNA ligase (654 aa).

A TGS domain is found at 1–63 (MASINVKFPD…TTDGSIEIIA (63 aa)). Residues 248-546 (DHRVIGNELD…LTEIYKGAFP (299 aa)) are catalytic. The Zn(2+) site is built by C342, H393, and H523.

Belongs to the class-II aminoacyl-tRNA synthetase family. As to quaternary structure, homodimer. It depends on Zn(2+) as a cofactor.

It localises to the cytoplasm. It carries out the reaction tRNA(Thr) + L-threonine + ATP = L-threonyl-tRNA(Thr) + AMP + diphosphate + H(+). Its function is as follows. Catalyzes the attachment of threonine to tRNA(Thr) in a two-step reaction: L-threonine is first activated by ATP to form Thr-AMP and then transferred to the acceptor end of tRNA(Thr). Also edits incorrectly charged L-seryl-tRNA(Thr). In Lactiplantibacillus plantarum (strain ATCC BAA-793 / NCIMB 8826 / WCFS1) (Lactobacillus plantarum), this protein is Threonine--tRNA ligase.